The following is a 156-amino-acid chain: Small ribosomal subunit protein uS7 (156 aa).

It belongs to the universal ribosomal protein uS7 family. Part of the 30S ribosomal subunit. Contacts proteins S9 and S11.

Its function is as follows. One of the primary rRNA binding proteins, it binds directly to 16S rRNA where it nucleates assembly of the head domain of the 30S subunit. Is located at the subunit interface close to the decoding center, probably blocks exit of the E-site tRNA. This Salmonella agona (strain SL483) protein is Small ribosomal subunit protein uS7.